The chain runs to 161 residues: uncharacterized protein (161 aa).

This is an uncharacterized protein from Sinorhizobium fredii (strain NBRC 101917 / NGR234).